Consider the following 266-residue polypeptide: Phosphatidate cytidylyltransferase (266 aa).

8 helical membrane passes run 16-36, 52-72, 78-98, 101-121, 125-145, 164-184, 186-206, and 237-257; these read FVLIIVADLILYADNLLLFWA, LFQVKASFSLYLILVLSWVAA, PIECALISAMVMASVIAYQKA, SEAILPFLYPGVGFFALFGVY, GAVAIIWLLVVVVASDVGAFF, LEGALIGVVLASVLGSFVGMG, LSGGFFMALFFSFLIALVAVF, and LDSMLFGALGLHALLYFLEIW.

It belongs to the CDS family.

The protein localises to the cell inner membrane. The catalysed reaction is a 1,2-diacyl-sn-glycero-3-phosphate + CTP + H(+) = a CDP-1,2-diacyl-sn-glycerol + diphosphate. It functions in the pathway phospholipid metabolism; CDP-diacylglycerol biosynthesis; CDP-diacylglycerol from sn-glycerol 3-phosphate: step 3/3. The chain is Phosphatidate cytidylyltransferase (cdsA) from Helicobacter pylori (strain ATCC 700392 / 26695) (Campylobacter pylori).